A 464-amino-acid chain; its full sequence is Chromosomal replication initiator protein DnaA (464 aa).

The domain I, interacts with DnaA modulators stretch occupies residues 1 to 82; that stretch reads MSLSLWQQCL…LLRFEVGSKP (82 aa). The domain II stretch occupies residues 82-127; the sequence is PITQVISQTVTASVSSAPAAPAARTAAPSRPSWDNAAAQPELSYRS. A compositionally biased stretch (low complexity) spans 98–113; the sequence is APAAPAARTAAPSRPS. A disordered region spans residues 98–117; that stretch reads APAAPAARTAAPSRPSWDNA. Residues 128–344 are domain III, AAA+ region; that stretch reads NVNPKHTFDN…GALNRVIANA (217 aa). Gly172, Gly174, Lys175, and Thr176 together coordinate ATP. A domain IV, binds dsDNA region spans residues 345–464; that stretch reads NFTGRAITID…FSNLIRTLSS (120 aa).

It belongs to the DnaA family. As to quaternary structure, oligomerizes as a right-handed, spiral filament on DNA at oriC.

The protein localises to the cytoplasm. Functionally, plays an important role in the initiation and regulation of chromosomal replication. Binds to the origin of replication; it binds specifically double-stranded DNA at a 9 bp consensus (dnaA box): 5'-TTATC[CA]A[CA]A-3'. DnaA binds to ATP and to acidic phospholipids. DnaA can inhibit its own gene expression as well as that of other genes. Plays an essential role in the initiation and regulation of chromosomal replication. ATP-DnaA binds to the origin of replication (oriC) to initiate formation of the DNA replication initiation complex once per cell cycle. Binds the DnaA box (a 9 base pair repeat at the origin) and separates the double-stranded (ds)DNA. Forms a right-handed helical filament on oriC DNA; dsDNA binds to the exterior of the filament while single-stranded (ss)DNA is stabiized in the filament's interior. The ATP-DnaA-oriC complex binds and stabilizes one strand of the AT-rich DNA unwinding element (DUE), permitting loading of DNA polymerase. After initiation quickly degrades to an ADP-DnaA complex that is not apt for DNA replication. Binds acidic phospholipids. The polypeptide is Chromosomal replication initiator protein DnaA (Serratia marcescens).